Reading from the N-terminus, the 361-residue chain is Plasmid recombination enzyme (361 aa).

DNA is bound by residues tyrosine 44 and tyrosine 114. The segment at arginine 331–leucine 361 is disordered.

The protein belongs to the plasmid mobilization pre family.

Functionally, the interaction of the RSA site and the pre protein may not only serve a function in plasmid maintenance, but also contribute to the distribution of small antibiotic resistance plasmids among Gram-positive bacteria. This is Plasmid recombination enzyme (preA) from Lactiplantibacillus plantarum (Lactobacillus plantarum).